A 38-amino-acid chain; its full sequence is Photosystem II reaction center protein L (38 aa).

The chain crosses the membrane as a helical span at residues 17 to 37; sequence SLFWGLLLIFVLAVLFSSYFF.

Belongs to the PsbL family. PSII is composed of 1 copy each of membrane proteins PsbA, PsbB, PsbC, PsbD, PsbE, PsbF, PsbH, PsbI, PsbJ, PsbK, PsbL, PsbM, PsbT, PsbX, PsbY, PsbZ, Psb30/Ycf12, at least 3 peripheral proteins of the oxygen-evolving complex and a large number of cofactors. It forms dimeric complexes.

The protein localises to the plastid. The protein resides in the chloroplast thylakoid membrane. In terms of biological role, one of the components of the core complex of photosystem II (PSII). PSII is a light-driven water:plastoquinone oxidoreductase that uses light energy to abstract electrons from H(2)O, generating O(2) and a proton gradient subsequently used for ATP formation. It consists of a core antenna complex that captures photons, and an electron transfer chain that converts photonic excitation into a charge separation. This subunit is found at the monomer-monomer interface and is required for correct PSII assembly and/or dimerization. This Zygnema circumcarinatum (Green alga) protein is Photosystem II reaction center protein L.